We begin with the raw amino-acid sequence, 72 residues long: Disintegrin cotiarin (72 aa).

The Disintegrin domain maps to 1-72; the sequence is EAGEECDCGA…SADCPRNRFH (72 aa). 6 disulfide bridges follow: C6–C21, C8–C16, C15–C38, C29–C35, C34–C59, and C47–C66. The Cell attachment site signature appears at 51–53; that stretch reads RGD. Residues 51-72 are disordered; it reads RGDNPDDRCTGQSADCPRNRFH.

Belongs to the venom metalloproteinase (M12B) family. P-II subfamily. P-IIa sub-subfamily. In terms of assembly, monomer. In terms of tissue distribution, expressed by the venom gland.

It is found in the secreted. Inhibits fibrinogen interaction with platelets. Acts by binding to alpha-IIb/beta-3 (ITGA2B/ITGB3) on the platelet surface and inhibits aggregation induced by ADP, thrombin, platelet-activating factor and collagen. The sequence is that of Disintegrin cotiarin from Bothrops cotiara (Cotiara).